The primary structure comprises 227 residues: ATP-dependent dethiobiotin synthetase BioD (227 aa).

Position 13 to 18 (13 to 18 (DIGKTY)) interacts with ATP. Thr-17 is a Mg(2+) binding site. Lys-38 is a catalytic residue. Ser-42 provides a ligand contact to substrate. ATP-binding positions include Asp-55, 116–119 (EGSG), and 179–180 (NN). Positions 55 and 116 each coordinate Mg(2+).

Belongs to the dethiobiotin synthetase family. As to quaternary structure, homodimer. Mg(2+) serves as cofactor.

It is found in the cytoplasm. The catalysed reaction is (7R,8S)-7,8-diammoniononanoate + CO2 + ATP = (4R,5S)-dethiobiotin + ADP + phosphate + 3 H(+). Its pathway is cofactor biosynthesis; biotin biosynthesis; biotin from 7,8-diaminononanoate: step 1/2. Catalyzes a mechanistically unusual reaction, the ATP-dependent insertion of CO2 between the N7 and N8 nitrogen atoms of 7,8-diaminopelargonic acid (DAPA, also called 7,8-diammoniononanoate) to form a ureido ring. This is ATP-dependent dethiobiotin synthetase BioD from Clostridium botulinum (strain Okra / Type B1).